Reading from the N-terminus, the 220-residue chain is Vesicle-associated membrane protein 7 (220 aa).

N-acetylalanine is present on Ala-2. Over 2 to 188 (AILFAVVARG…ARAMCMKNLK (187 aa)) the chain is Cytoplasmic. The Longin domain maps to 7–110 (VVARGTTILA…AMNSEFSSVL (104 aa)). One can recognise a v-SNARE coiled-coil homology domain in the interval 125 to 185 (KVMETQAQVD…RNLARAMCMK (61 aa)). A phosphoserine mark is found at Ser-167 and Ser-168. A helical; Anchor for type IV membrane protein transmembrane segment spans residues 189 to 209 (LTIIIIIVSIVFIYIIVSPLC). Over 210–220 (GGFTWPSCVKK) the chain is Vesicular.

It belongs to the synaptobrevin family. In terms of assembly, component of the SNARE complex composed of STX4, SNAP23 and VAMP7 that binds SYT7 during lysosomal exocytosis. Component of the SNARE complex composed of STX7, STX8, VAMP7 and VTI1B that is required for heterotypic fusion of late endosomes with lysosomes in liver cells. May interact with STX17. Interacts with PICALM. Interacts with RAB21.

It localises to the cytoplasmic vesicle. The protein localises to the secretory vesicle membrane. Its subcellular location is the golgi apparatus. It is found in the trans-Golgi network membrane. The protein resides in the late endosome membrane. It localises to the lysosome membrane. The protein localises to the endoplasmic reticulum membrane. Its subcellular location is the phagosome membrane. It is found in the synapse. The protein resides in the synaptosome. Involved in the targeting and/or fusion of transport vesicles to their target membrane during transport of proteins from the early endosome to the lysosome. Required for heterotypic fusion of late endosomes with lysosomes and homotypic lysosomal fusion. Required for calcium regulated lysosomal exocytosis. Involved in the export of chylomicrons from the endoplasmic reticulum to the cis Golgi. Required for exocytosis of mediators during eosinophil and neutrophil degranulation, and target cell killing by natural killer cells. Required for focal exocytosis of late endocytic vesicles during phagosome formation. The chain is Vesicle-associated membrane protein 7 (VAMP7) from Pongo abelii (Sumatran orangutan).